A 304-amino-acid polypeptide reads, in one-letter code: Oxygen-dependent coproporphyrinogen-III oxidase (304 aa).

S94 contacts substrate. Residues H98 and H108 each contribute to the a divalent metal cation site. The Proton donor role is filled by H108. 110–112 (NVR) is a binding site for substrate. A divalent metal cation contacts are provided by H147 and H177. Residues 242 to 277 (YVEFNLVYDRGTLFGLQTGGRTESILMSMPPLVRWE) are important for dimerization. Position 260–262 (260–262 (GGR)) interacts with substrate.

It belongs to the aerobic coproporphyrinogen-III oxidase family. In terms of assembly, homodimer. A divalent metal cation is required as a cofactor.

The protein resides in the cytoplasm. The catalysed reaction is coproporphyrinogen III + O2 + 2 H(+) = protoporphyrinogen IX + 2 CO2 + 2 H2O. The protein operates within porphyrin-containing compound metabolism; protoporphyrin-IX biosynthesis; protoporphyrinogen-IX from coproporphyrinogen-III (O2 route): step 1/1. Functionally, involved in the heme biosynthesis. Catalyzes the aerobic oxidative decarboxylation of propionate groups of rings A and B of coproporphyrinogen-III to yield the vinyl groups in protoporphyrinogen-IX. The polypeptide is Oxygen-dependent coproporphyrinogen-III oxidase (Shewanella halifaxensis (strain HAW-EB4)).